A 270-amino-acid polypeptide reads, in one-letter code: Diaminopimelate epimerase (270 aa).

Substrate-binding residues include N15, Q49, and N66. C75 acts as the Proton donor in catalysis. Substrate-binding positions include G76 to N77, N155, N187, and E204 to R205. C213 functions as the Proton acceptor in the catalytic mechanism. A substrate-binding site is contributed by G214–S215.

The protein belongs to the diaminopimelate epimerase family. Homodimer.

Its subcellular location is the cytoplasm. It carries out the reaction (2S,6S)-2,6-diaminopimelate = meso-2,6-diaminopimelate. It functions in the pathway amino-acid biosynthesis; L-lysine biosynthesis via DAP pathway; DL-2,6-diaminopimelate from LL-2,6-diaminopimelate: step 1/1. Catalyzes the stereoinversion of LL-2,6-diaminopimelate (L,L-DAP) to meso-diaminopimelate (meso-DAP), a precursor of L-lysine and an essential component of the bacterial peptidoglycan. The polypeptide is Diaminopimelate epimerase (Rickettsia conorii (strain ATCC VR-613 / Malish 7)).